The chain runs to 327 residues: Phenylalanine--tRNA ligase alpha subunit (327 aa).

Residue Glu-252 coordinates Mg(2+).

This sequence belongs to the class-II aminoacyl-tRNA synthetase family. Phe-tRNA synthetase alpha subunit type 1 subfamily. In terms of assembly, tetramer of two alpha and two beta subunits. Mg(2+) serves as cofactor.

Its subcellular location is the cytoplasm. The catalysed reaction is tRNA(Phe) + L-phenylalanine + ATP = L-phenylalanyl-tRNA(Phe) + AMP + diphosphate + H(+). This chain is Phenylalanine--tRNA ligase alpha subunit, found in Haemophilus ducreyi (strain 35000HP / ATCC 700724).